A 60-amino-acid chain; its full sequence is Small, acid-soluble spore protein C2 (60 aa).

The protein belongs to the alpha/beta-type SASP family. Post-translationally, SASP are degraded in the first minutes of spore germination and provide amino acids for both new protein synthesis and metabolism.

Its function is as follows. SASP are bound to spore DNA. They are double-stranded DNA-binding proteins that cause DNA to change to an a-like conformation. They protect the DNA backbone from chemical and enzymatic cleavage and are thus involved in dormant spore's high resistance to UV light. This chain is Small, acid-soluble spore protein C2 (sspC2), found in Clostridium perfringens (strain 13 / Type A).